The following is a 436-amino-acid chain: Ribulose bisphosphate carboxylase large chain (436 aa).

Substrate is bound by residues asparagine 104 and threonine 154. The active-site Proton acceptor is the lysine 156. Lysine 158 serves as a coordination point for substrate. Residues lysine 182, aspartate 184, and glutamate 185 each contribute to the Mg(2+) site. At lysine 182 the chain carries N6-carboxylysine. The active-site Proton acceptor is histidine 275. 3 residues coordinate substrate: arginine 276, histidine 308, and serine 360.

Belongs to the RuBisCO large chain family. Type I subfamily. Heterohexadecamer of 8 large chains and 8 small chains. The cofactor is Mg(2+).

Its subcellular location is the plastid. The protein resides in the chloroplast. It carries out the reaction 2 (2R)-3-phosphoglycerate + 2 H(+) = D-ribulose 1,5-bisphosphate + CO2 + H2O. The catalysed reaction is D-ribulose 1,5-bisphosphate + O2 = 2-phosphoglycolate + (2R)-3-phosphoglycerate + 2 H(+). Functionally, ruBisCO catalyzes two reactions: the carboxylation of D-ribulose 1,5-bisphosphate, the primary event in carbon dioxide fixation, as well as the oxidative fragmentation of the pentose substrate in the photorespiration process. Both reactions occur simultaneously and in competition at the same active site. This Euglena viridis (Cercaria viridis) protein is Ribulose bisphosphate carboxylase large chain.